We begin with the raw amino-acid sequence, 259 residues long: Type III pantothenate kinase (259 aa).

6–13 (DVGNTNIV) serves as a coordination point for ATP. Substrate-binding positions include Tyr-100 and 107 to 110 (GADR). Asp-109 serves as the catalytic Proton acceptor. Asp-129 contributes to the K(+) binding site. Thr-132 is an ATP binding site. Thr-184 serves as a coordination point for substrate.

The protein belongs to the type III pantothenate kinase family. In terms of assembly, homodimer. It depends on NH4(+) as a cofactor. Requires K(+) as cofactor.

Its subcellular location is the cytoplasm. The catalysed reaction is (R)-pantothenate + ATP = (R)-4'-phosphopantothenate + ADP + H(+). The protein operates within cofactor biosynthesis; coenzyme A biosynthesis; CoA from (R)-pantothenate: step 1/5. Catalyzes the phosphorylation of pantothenate (Pan), the first step in CoA biosynthesis. The polypeptide is Type III pantothenate kinase (Clostridium kluyveri (strain NBRC 12016)).